A 133-amino-acid polypeptide reads, in one-letter code: MAREFSRTDRVAQQVHKEVASILQNEYKHRVGDMPLITVSDVDVSRDLAHAKIFVTIYNSTEEEGKVQIKQLAEYKKFIRSILAKRLRMRSVPDLHFFEDKSIIEGMRISNLVSQTIAKDESKRDQDDSQEQE.

The protein belongs to the RbfA family. In terms of assembly, monomer. Binds 30S ribosomal subunits, but not 50S ribosomal subunits or 70S ribosomes.

It is found in the cytoplasm. Functionally, one of several proteins that assist in the late maturation steps of the functional core of the 30S ribosomal subunit. Associates with free 30S ribosomal subunits (but not with 30S subunits that are part of 70S ribosomes or polysomes). Required for efficient processing of 16S rRNA. May interact with the 5'-terminal helix region of 16S rRNA. This chain is Ribosome-binding factor A, found in Alteromonas mediterranea (strain DSM 17117 / CIP 110805 / LMG 28347 / Deep ecotype).